A 323-amino-acid polypeptide reads, in one-letter code: MKYTEFEIISKYFKRNQKKDVNEIKGIGDDSALIKIPKNNILAISTDTLVEGTHFLKNISPEDLGYKTVAVNLSDLAAMGAEPKWTTLSITMPESNNIWLKKFSSSFFKILNKYNVRLIGGDTNRGSLSITLSMYGLLKKQIALLRSNANIGDLIYVTGTLGESAAGLFLLKKNIFIKNVNIRNYLIKKHLNPIPRVSEGMALRKIANAAIDLSDGLIADLDHILNDSQCGANINLNKIPISKVLIDNFQSQNYLNWALNVGEDYELCFTISKKNIDKLKIIKKKFLVNFTCIGYITPIEQGFNLFDNQKKIIFKKKGFNHFD.

Mg(2+) contacts are provided by Asp-30, Ser-45, Thr-46, and Asp-47. His-54 contributes to the substrate binding site. Mg(2+)-binding residues include Asp-75 and Asp-122. ATP contacts are provided by residues Gly-121–Asp-122 and Arg-146. Asp-212 is a Mg(2+) binding site. Ser-214 serves as a coordination point for ATP. A Mg(2+)-binding site is contributed by Asp-215. 2 residues coordinate substrate: Glu-263 and Phe-319.

The protein belongs to the thiamine-monophosphate kinase family.

The enzyme catalyses thiamine phosphate + ATP = thiamine diphosphate + ADP. It participates in cofactor biosynthesis; thiamine diphosphate biosynthesis; thiamine diphosphate from thiamine phosphate: step 1/1. Its function is as follows. Catalyzes the ATP-dependent phosphorylation of thiamine-monophosphate (TMP) to form thiamine-pyrophosphate (TPP), the active form of vitamin B1. The polypeptide is Thiamine-monophosphate kinase (Buchnera aphidicola subsp. Acyrthosiphon pisum (strain APS) (Acyrthosiphon pisum symbiotic bacterium)).